We begin with the raw amino-acid sequence, 284 residues long: BTB/POZ domain-containing protein 2 (284 aa).

Residues 37 to 108 (SDTTLIIKGE…LYCDSPRIPA (72 aa)) enclose the BTB domain.

As to quaternary structure, interacts with cul3.

It is found in the cytoplasm. It localises to the nucleus. It functions in the pathway protein modification; protein ubiquitination. In terms of biological role, probable substrate-specific adapter of an E3 ubiquitin-protein ligase complex which mediates the ubiquitination and subsequent proteasomal degradation of target proteins. This Schizosaccharomyces pombe (strain 972 / ATCC 24843) (Fission yeast) protein is BTB/POZ domain-containing protein 2 (btb2).